Here is a 229-residue protein sequence, read N- to C-terminus: Uracil-DNA glycosylase (229 aa).

D65 functions as the Proton acceptor in the catalytic mechanism.

Belongs to the uracil-DNA glycosylase (UDG) superfamily. UNG family.

Its subcellular location is the cytoplasm. The enzyme catalyses Hydrolyzes single-stranded DNA or mismatched double-stranded DNA and polynucleotides, releasing free uracil.. Excises uracil residues from the DNA which can arise as a result of misincorporation of dUMP residues by DNA polymerase or due to deamination of cytosine. The polypeptide is Uracil-DNA glycosylase (Latilactobacillus sakei subsp. sakei (strain 23K) (Lactobacillus sakei subsp. sakei)).